We begin with the raw amino-acid sequence, 380 residues long: Queuine tRNA-ribosyltransferase (380 aa).

D96 (proton acceptor) is an active-site residue. Substrate contacts are provided by residues 96 to 100 (DSGGF), D150, Q193, and G220. The segment at 251–257 (GVGAPDS) is RNA binding. D270 functions as the Nucleophile in the catalytic mechanism. Positions 275 to 279 (TRIAR) are RNA binding; important for wobble base 34 recognition. The Zn(2+) site is built by C308, C310, C313, and H339.

Belongs to the queuine tRNA-ribosyltransferase family. Homodimer. Within each dimer, one monomer is responsible for RNA recognition and catalysis, while the other monomer binds to the replacement base PreQ1. It depends on Zn(2+) as a cofactor.

The enzyme catalyses 7-aminomethyl-7-carbaguanine + guanosine(34) in tRNA = 7-aminomethyl-7-carbaguanosine(34) in tRNA + guanine. It functions in the pathway tRNA modification; tRNA-queuosine biosynthesis. Functionally, catalyzes the base-exchange of a guanine (G) residue with the queuine precursor 7-aminomethyl-7-deazaguanine (PreQ1) at position 34 (anticodon wobble position) in tRNAs with GU(N) anticodons (tRNA-Asp, -Asn, -His and -Tyr). Catalysis occurs through a double-displacement mechanism. The nucleophile active site attacks the C1' of nucleotide 34 to detach the guanine base from the RNA, forming a covalent enzyme-RNA intermediate. The proton acceptor active site deprotonates the incoming PreQ1, allowing a nucleophilic attack on the C1' of the ribose to form the product. After dissociation, two additional enzymatic reactions on the tRNA convert PreQ1 to queuine (Q), resulting in the hypermodified nucleoside queuosine (7-(((4,5-cis-dihydroxy-2-cyclopenten-1-yl)amino)methyl)-7-deazaguanosine). In Streptococcus pneumoniae (strain ATCC BAA-255 / R6), this protein is Queuine tRNA-ribosyltransferase.